We begin with the raw amino-acid sequence, 424 residues long: Serine--tRNA ligase (424 aa).

An L-serine-binding site is contributed by Thr229–Glu231. Residues Arg260–Glu262 and Val276 each bind ATP. An L-serine-binding site is contributed by Glu283. Residue Glu347–Ser350 participates in ATP binding. Position 382 (Thr382) interacts with L-serine.

Belongs to the class-II aminoacyl-tRNA synthetase family. Type-1 seryl-tRNA synthetase subfamily. In terms of assembly, homodimer. The tRNA molecule binds across the dimer.

The protein localises to the cytoplasm. It carries out the reaction tRNA(Ser) + L-serine + ATP = L-seryl-tRNA(Ser) + AMP + diphosphate + H(+). The enzyme catalyses tRNA(Sec) + L-serine + ATP = L-seryl-tRNA(Sec) + AMP + diphosphate + H(+). Its pathway is aminoacyl-tRNA biosynthesis; selenocysteinyl-tRNA(Sec) biosynthesis; L-seryl-tRNA(Sec) from L-serine and tRNA(Sec): step 1/1. In terms of biological role, catalyzes the attachment of serine to tRNA(Ser). Is also able to aminoacylate tRNA(Sec) with serine, to form the misacylated tRNA L-seryl-tRNA(Sec), which will be further converted into selenocysteinyl-tRNA(Sec). This chain is Serine--tRNA ligase, found in Rubrobacter xylanophilus (strain DSM 9941 / JCM 11954 / NBRC 16129 / PRD-1).